The primary structure comprises 434 residues: Eukaryotic peptide chain release factor subunit 1-1 (434 aa).

This sequence belongs to the eukaryotic release factor 1 family. Heterodimer of two subunits, one of which binds GTP.

The protein resides in the cytoplasm. In terms of biological role, directs the termination of nascent peptide synthesis (translation) in response to the termination codons UAA, UAG and UGA. Modulates plant growth and development. In Brassica oleracea var. botrytis (Cauliflower), this protein is Eukaryotic peptide chain release factor subunit 1-1.